Here is a 900-residue protein sequence, read N- to C-terminus: Nonribosomal peptide synthetase AMT10 (900 aa).

The adenylation stretch occupies residues 284-686 (KQAQQNPAAM…ARRNGYIKLR (403 aa)). Residues 824-900 (ELQSDMERYL…QMARNCSLLD (77 aa)) form the Carrier domain. Residue S861 is modified to O-(pantetheine 4'-phosphoryl)serine.

This sequence belongs to the NRP synthetase family.

The protein operates within mycotoxin biosynthesis. Functionally, nonribosomal peptide synthetase; part of the gene clusters that mediate the biosynthesis of AM-toxins, host-selective toxins (HSTs) causing Alternaria blotch on apple, a worldwide distributed disease. AM-toxins are cyclic depsipeptides containing the 3 residues 2-hydroxy-isovaleric acid (2-HIV), dehydroalanine, L-alanine which are common for all 3 AM-toxins I to III. The fourth precursor is L-alpha-amino-methoxyphenyl-valeric acid (L-Amv) for AM-toxin I, L-alpha-amino-phenyl-valeric acid (L-Apv) for AM-toxin II, and L-alpha-amino-hydroxyphenyl-valeric acid (L-Ahv) for AM-toxin III. AM-toxins have two target sites for affecting susceptible apple cells; they cause invagination of the plasma membrane and electrolyte loss and chloroplast disorganization. The non-ribosomal peptide synthetase AMT1 contains 4 catalytic modules and is responsible for activation of each residue in AM-toxin. The aldo-keto reductase AMT2 catalyzes the conversion of 2-keto-isovaleric acid (2-KIV) to 2-hydroxy-isovaleric acid (2-HIV), one of the precursor residues incorporated by AMT1 during AM-toxin biosynthesis, by reduction of its ketone to an alcohol. The cytochrome P450 monooxygenase AMT3 and the thioesterase AMT4 are also important for AM-toxin production, but their exact function within the AM-toxin biosynthesis are not known yet. Up to 21 proteins (including AMT1 to AMT4) are predicted to be involved in AM-toxin biosynthesis since their expression ishighly up-regulated in AM-toxin-producing cultures. In Alternaria alternata (Alternaria rot fungus), this protein is Nonribosomal peptide synthetase AMT10.